Reading from the N-terminus, the 440-residue chain is Acetylornithine deacetylase (440 aa).

His-101 contributes to the Zn(2+) binding site. Residue Asp-103 is part of the active site. Residue Asp-133 participates in Zn(2+) binding. Glu-167 functions as the Proton acceptor in the catalytic mechanism. Zn(2+) is bound by residues Glu-168 and His-412.

This sequence belongs to the peptidase M20A family. ArgE subfamily. As to quaternary structure, homodimer. Zn(2+) is required as a cofactor. Co(2+) serves as cofactor.

It catalyses the reaction N(2)-acetyl-L-ornithine + H2O = L-ornithine + acetate. It participates in amino-acid biosynthesis; L-arginine biosynthesis; L-ornithine from N(2)-acetyl-L-ornithine (linear): step 1/1. The sequence is that of Acetylornithine deacetylase from Arabidopsis thaliana (Mouse-ear cress).